We begin with the raw amino-acid sequence, 300 residues long: Protoheme IX farnesyltransferase 1 (300 aa).

Transmembrane regions (helical) follow at residues 28 to 48 (VVAL…PTIL), 54 to 74 (VAGL…NHLI), 100 to 120 (ALLF…VFTN), 122 to 142 (LTAW…TAYL), 149 to 169 (NIVI…TAVT), 176 to 196 (ALLL…ALAI), 222 to 242 (CILL…LVGM), 243 to 263 (SGPL…YKAW), and 280 to 300 (FSIY…YLWA).

This sequence belongs to the UbiA prenyltransferase family. Protoheme IX farnesyltransferase subfamily.

Its subcellular location is the cell inner membrane. It carries out the reaction heme b + (2E,6E)-farnesyl diphosphate + H2O = Fe(II)-heme o + diphosphate. It participates in porphyrin-containing compound metabolism; heme O biosynthesis; heme O from protoheme: step 1/1. Converts heme B (protoheme IX) to heme O by substitution of the vinyl group on carbon 2 of heme B porphyrin ring with a hydroxyethyl farnesyl side group. This is Protoheme IX farnesyltransferase 1 from Shewanella sp. (strain MR-4).